A 74-amino-acid polypeptide reads, in one-letter code: Conotoxin Im6.10 (74 aa).

The N-terminal stretch at 1-19 is a signal peptide; it reads MKTGMIICLLLIAFMDADG. The propeptide occupies 20–47; it reads SPGDTLYSQKTADTDSGMKRFQKTFQKR. Intrachain disulfides connect C49/C58, C52/C63, and C57/C73.

As to expression, expressed by the venom duct.

It is found in the secreted. In terms of biological role, probable neurotoxin. This chain is Conotoxin Im6.10, found in Conus imperialis (Imperial cone).